The sequence spans 84 residues: Limulin (84 aa).

The 79-residue stretch at 6–84 (ITSKVKFPPS…DEQGDFLFNV (79 aa)) folds into the Pentraxin (PTX) domain. Residues Asp-67 and Asn-68 each contribute to the Ca(2+) site.

It belongs to the pentraxin family. In terms of assembly, homopentamer. Pentraxin (or pentaxin) have a discoid arrangement of 5 non-covalently bound subunits. The cofactor is Ca(2+). In terms of processing, a disulfide bond links Cys-38 to a Cys in the C-terminal half of the chain of 163 residues.

Lectin that binds sialic acid. Displays antiviral activity and therefore may contribute to defense against infections. The polypeptide is Limulin (Limulus polyphemus (Atlantic horseshoe crab)).